A 156-amino-acid polypeptide reads, in one-letter code: 6,7-dimethyl-8-ribityllumazine synthase (156 aa).

5-amino-6-(D-ribitylamino)uracil contacts are provided by residues phenylalanine 22, 57 to 59, and 81 to 83; these read AVE and SVI. 86–87 lines the (2S)-2-hydroxy-3-oxobutyl phosphate pocket; the sequence is GT. The Proton donor role is filled by histidine 89. 5-amino-6-(D-ribitylamino)uracil is bound at residue phenylalanine 114. Arginine 128 is a (2S)-2-hydroxy-3-oxobutyl phosphate binding site.

The protein belongs to the DMRL synthase family. Forms an icosahedral capsid composed of 60 subunits, arranged as a dodecamer of pentamers.

The enzyme catalyses (2S)-2-hydroxy-3-oxobutyl phosphate + 5-amino-6-(D-ribitylamino)uracil = 6,7-dimethyl-8-(1-D-ribityl)lumazine + phosphate + 2 H2O + H(+). The protein operates within cofactor biosynthesis; riboflavin biosynthesis; riboflavin from 2-hydroxy-3-oxobutyl phosphate and 5-amino-6-(D-ribitylamino)uracil: step 1/2. Functionally, catalyzes the formation of 6,7-dimethyl-8-ribityllumazine by condensation of 5-amino-6-(D-ribitylamino)uracil with 3,4-dihydroxy-2-butanone 4-phosphate. This is the penultimate step in the biosynthesis of riboflavin. The protein is 6,7-dimethyl-8-ribityllumazine synthase of Aliivibrio fischeri (strain ATCC 700601 / ES114) (Vibrio fischeri).